The primary structure comprises 58 residues: Birtoxin (58 aa).

In terms of domain architecture, LCN-type CS-alpha/beta spans 3 to 58 (VPGNYPLDKDGNTYKCFLLGGNEECLNVCKLHGVQYGYCYASKCWCEYLEDDKDSV). 3 cysteine pairs are disulfide-bonded: C18–C41, C27–C46, and C31–C48.

As to expression, expressed by the venom gland.

It localises to the secreted. Beta toxins bind voltage-independently at site-4 of sodium channels (Nav) and shift the voltage of activation toward more negative potentials thereby affecting sodium channel activation and promoting spontaneous and repetitive firing. Moderately toxic, but very high abundant. Does not target reptilian channels. Does not produce effect when administered to blowfly and cabbage looper larvae. In mice, produces convulsions, tremors, increased ventilation and, subsequently, death. This is Birtoxin from Parabuthus transvaalicus (Transvaal thick-tailed scorpion).